The following is a 346-amino-acid chain: MVEKEEAGGGISEEEAAQYDRQIRLWGLEAQKRLRASQVLLVGMKGLGAEIAKNLILAGVKGLTMLDHEQVSPEDPGAQFLIRTGSVGRNRAEASLERAQNLNPMVDVKVDTENIEKKPESFFTQFDAVCLTCCSRDVIVKVDQICHKNSIKFFTGDVFGYHGYTFANLGEHEFVEEKTKVAKVSQGVEDGPDTKRAKLDSSETTMVKKKVVFCSVKEALEVDWSSDKAKAALKRTTPDYFLLQVLLKFRTDKGRDPSSDTFGEDSELLLQIRNDVLDALGVNPDLLPEDFVRYCFSEMAPVCAVVGGILAQEIVKALSQRDPPHNNFFFFDGMKGNGIVECLGPN.

At Met1 the chain carries N-acetylmethionine. An N-acetylvaline; in SUMO-activating enzyme subunit 1, N-terminally processed modification is found at Val2. The residue at position 12 (Ser12) is a Phosphoserine. N6-acetyllysine is present on Lys198.

The protein belongs to the ubiquitin-activating E1 family. As to quaternary structure, heterodimer of SAE1 and UBA2/SAE2. The heterodimer corresponds to the two domains that are encoded on a single polypeptide chain in ubiquitin-activating enzyme E1. Interacts with UBE2I.

The protein resides in the nucleus. Its pathway is protein modification; protein sumoylation. Functionally, the heterodimer acts as an E1 ligase for SUMO1, SUMO2, SUMO3, and probably SUMO4. It mediates ATP-dependent activation of SUMO proteins followed by formation of a thioester bond between a SUMO protein and a conserved active site cysteine residue on UBA2/SAE2. The protein is SUMO-activating enzyme subunit 1 (SAE1) of Bos taurus (Bovine).